Reading from the N-terminus, the 1082-residue chain is SURP and G-patch domain-containing protein 2 (1082 aa).

The residue at position 7 (T7) is a Phosphothreonine. The tract at residues 65-97 is disordered; the sequence is LSGSVAHSRDAGREGLRSDVFPGPSFRSSNPSI. The span at 71–81 shows a compositional bias: basic and acidic residues; it reads HSRDAGREGLR. 2 positions are modified to phosphoserine: S96 and S224. Residue K228 forms a Glycyl lysine isopeptide (Lys-Gly) (interchain with G-Cter in SUMO2) linkage. T275 is subject to Phosphothreonine. A Phosphoserine modification is found at S277. K305 participates in a covalent cross-link: Glycyl lysine isopeptide (Lys-Gly) (interchain with G-Cter in SUMO2). S315, S573, and S603 each carry phosphoserine. Residues 590–633 form an SURP motif 1 repeat; it reads IDQLVKRVIEGSLSPKERTLLKEDPAYWFLSDENSLEYKYYKLK. Residue K650 forms a Glycyl lysine isopeptide (Lys-Gly) (interchain with G-Cter in SUMO2) linkage. The segment at 694 to 779 is disordered; that stretch reads RRATTGTQTL…QTSSPCPSAD (86 aa). Over residues 697-708 the composition is skewed to low complexity; the sequence is TTGTQTLLSSGT. Over residues 727 to 738 the composition is skewed to basic and acidic residues; that stretch reads LPDRNDAAKDCP. S754 and S757 each carry phosphoserine. Residues 787 to 830 form an SURP motif 2 repeat; sequence TAEKLARFVAQVGPEIEQFSIENSTDNPDLWFLHDQNSSAFKFY. 3 disordered regions span residues 849–930, 982–1002, and 1030–1061; these read NLHT…EAAE, RIAY…PKDL, and LGSL…EHKE. Phosphoserine is present on S863. Composition is skewed to acidic residues over residues 868 to 877 and 885 to 904; these read MEGEAEFEDE and LESP…DGGE. Residues 990–999 show a composition bias toward basic residues; that stretch reads GRPMSKKKKP. The short motif at 995 to 1000 is the Nuclear localization signal element; that stretch reads KKKKPK. The 47-residue stretch at 1011–1057 folds into the G-patch domain; the sequence is DKNLGFQMLQKMGWKEGHGLGSLGKGIREPVSVGTPSEGEGLGADGQ.

In terms of tissue distribution, detected in adult testis, and in fetal brain and kidney.

The protein resides in the nucleus. May play a role in mRNA splicing. This is SURP and G-patch domain-containing protein 2 (SUGP2) from Homo sapiens (Human).